Here is a 285-residue protein sequence, read N- to C-terminus: Acrosomal protein SP-10 (285 aa).

An N-terminal signal peptide occupies residues methionine 1–glycine 21. Positions threonine 64–serine 200 are disordered. 19 tandem repeats follow at residues serine 66–serine 70, serine 71–serine 75, proline 85–alanine 89, serine 91–serine 95, valine 110–proline 114, serine 115–proline 119, serine 120–leucine 124, serine 125–serine 129, leucine 130–alanine 134, serine 135–proline 139, serine 145–alanine 149, serine 150–proline 154, serine 155–alanine 159, serine 160–proline 164, serine 165–proline 169, serine 170–alanine 174, serine 175–serine 179, leucine 180–alanine 184, and serine 190–proline 194. The segment at serine 66–serine 95 is 3 X 5 AA repeats of S-E-H-[GA]-A. Over residues glycine 69 to serine 95 the composition is skewed to basic and acidic residues. Positions proline 85–alanine 184 are 7 X 5 AA repeats of S-G-E-H-[AL]. The tract at residues valine 110–proline 194 is 9 X 5 AA repeats of [SV]-G-E-Q-[PSA]. Asparagine 278 carries an N-linked (GlcNAc...) asparagine glycan.

In terms of tissue distribution, testis.

Its subcellular location is the cytoplasmic vesicle. The protein localises to the secretory vesicle. It localises to the acrosome. This chain is Acrosomal protein SP-10 (ACRV1), found in Papio hamadryas (Hamadryas baboon).